A 404-amino-acid polypeptide reads, in one-letter code: L-cysteine:1D-myo-inositol 2-amino-2-deoxy-alpha-D-glucopyranoside ligase (404 aa).

Zn(2+) is bound at residue Cys-35. L-cysteinyl-5'-AMP is bound by residues 35-38 (CGIT), Thr-50, and 73-75 (NVT). Positions 37–47 (ITPYDATHLGH) match the 'HIGH' region motif. The 'ERGGDP' region motif lies at 178 to 183 (ERGGDP). Residue Trp-219 participates in L-cysteinyl-5'-AMP binding. Zn(2+) is bound at residue Cys-223. Residue 241 to 243 (GND) coordinates L-cysteinyl-5'-AMP. Zn(2+) is bound at residue His-248. Ile-275 is an L-cysteinyl-5'-AMP binding site. Positions 281 to 285 (KMSKS) match the 'KMSKS' region motif.

The protein belongs to the class-I aminoacyl-tRNA synthetase family. MshC subfamily. Monomer. The cofactor is Zn(2+).

The enzyme catalyses 1D-myo-inositol 2-amino-2-deoxy-alpha-D-glucopyranoside + L-cysteine + ATP = 1D-myo-inositol 2-(L-cysteinylamino)-2-deoxy-alpha-D-glucopyranoside + AMP + diphosphate + H(+). Its function is as follows. Catalyzes the ATP-dependent condensation of GlcN-Ins and L-cysteine to form L-Cys-GlcN-Ins. In Salinispora tropica (strain ATCC BAA-916 / DSM 44818 / JCM 13857 / NBRC 105044 / CNB-440), this protein is L-cysteine:1D-myo-inositol 2-amino-2-deoxy-alpha-D-glucopyranoside ligase.